The chain runs to 404 residues: Interferon-activable protein 205-A (404 aa).

The Pyrin domain maps to 1–88 (MENEYKRLVL…AEILKKERSE (88 aa)). The disordered stretch occupies residues 85–198 (ERSEVTEETS…KSQPQNQNIP (114 aa)). Low complexity-rich tracts occupy residues 102-112 (ASPATPTSTTS) and 122-132 (TSTTQEETSTA). Positions 137–147 (GMSEEKTDVKK) are enriched in basic and acidic residues. Over residues 168–185 (QSPISQVSSSASSNIPSA) the composition is skewed to low complexity. Residues 186-197 (KNQKSQPQNQNI) are compositionally biased toward polar residues. In terms of domain architecture, HIN-200 spans 192-392 (PQNQNIPRGA…CGDHSFVKVT (201 aa)).

It belongs to the HIN-200 family.

It is found in the nucleus. Functionally, may act as a transcriptional regulator in the myeloid lineage. Inhibits cell growth via p53/TP53 and RB1-dependent and independent pathways. The chain is Interferon-activable protein 205-A (Ifi205a) from Mus musculus (Mouse).